Reading from the N-terminus, the 354-residue chain is UDP-N-acetylglucosamine--N-acetylmuramyl-(pentapeptide) pyrophosphoryl-undecaprenol N-acetylglucosamine transferase (354 aa).

Residues 11 to 13 (TAG), Arg-164, Ser-194, and Gln-289 contribute to the UDP-N-acetyl-alpha-D-glucosamine site.

Belongs to the glycosyltransferase 28 family. MurG subfamily.

The protein resides in the cell membrane. It carries out the reaction di-trans,octa-cis-undecaprenyl diphospho-N-acetyl-alpha-D-muramoyl-L-alanyl-D-glutamyl-meso-2,6-diaminopimeloyl-D-alanyl-D-alanine + UDP-N-acetyl-alpha-D-glucosamine = di-trans,octa-cis-undecaprenyl diphospho-[N-acetyl-alpha-D-glucosaminyl-(1-&gt;4)]-N-acetyl-alpha-D-muramoyl-L-alanyl-D-glutamyl-meso-2,6-diaminopimeloyl-D-alanyl-D-alanine + UDP + H(+). It functions in the pathway cell wall biogenesis; peptidoglycan biosynthesis. Its function is as follows. Cell wall formation. Catalyzes the transfer of a GlcNAc subunit on undecaprenyl-pyrophosphoryl-MurNAc-pentapeptide (lipid intermediate I) to form undecaprenyl-pyrophosphoryl-MurNAc-(pentapeptide)GlcNAc (lipid intermediate II). This is UDP-N-acetylglucosamine--N-acetylmuramyl-(pentapeptide) pyrophosphoryl-undecaprenol N-acetylglucosamine transferase from Clostridium botulinum (strain Kyoto / Type A2).